A 263-amino-acid chain; its full sequence is uncharacterized protein (263 aa).

ATP is bound at residue 31–38; sequence GPTGSGKT.

It belongs to the CbbQ/NirQ/NorQ/GpvN family.

This is an uncharacterized protein from Staphylococcus epidermidis (strain ATCC 12228 / FDA PCI 1200).